Here is a 403-residue protein sequence, read N- to C-terminus: Imidazolonepropionase (403 aa).

His-68 and His-70 together coordinate Fe(3+). Residues His-68 and His-70 each contribute to the Zn(2+) site. The 4-imidazolone-5-propanoate site is built by Arg-77, Tyr-140, and His-173. Tyr-140 contacts N-formimidoyl-L-glutamate. Residue His-238 coordinates Fe(3+). His-238 is a Zn(2+) binding site. A 4-imidazolone-5-propanoate-binding site is contributed by Gln-241. Asp-313 is a Fe(3+) binding site. Zn(2+) is bound at residue Asp-313. N-formimidoyl-L-glutamate-binding residues include Asn-315 and Gly-317. Position 318 (Thr-318) interacts with 4-imidazolone-5-propanoate.

This sequence belongs to the metallo-dependent hydrolases superfamily. HutI family. The cofactor is Zn(2+). Requires Fe(3+) as cofactor.

The protein localises to the cytoplasm. It carries out the reaction 4-imidazolone-5-propanoate + H2O = N-formimidoyl-L-glutamate. Its pathway is amino-acid degradation; L-histidine degradation into L-glutamate; N-formimidoyl-L-glutamate from L-histidine: step 3/3. Its function is as follows. Catalyzes the hydrolytic cleavage of the carbon-nitrogen bond in imidazolone-5-propanoate to yield N-formimidoyl-L-glutamate. It is the third step in the universal histidine degradation pathway. This Psychromonas ingrahamii (strain DSM 17664 / CCUG 51855 / 37) protein is Imidazolonepropionase.